A 72-amino-acid chain; its full sequence is Disintegrin basilicin (72 aa).

A Disintegrin domain is found at 1–72 (AGEECDCGSP…ADCPRNHFHA (72 aa)). Intrachain disulfides connect C5–C20, C7–C15, C14–C37, C28–C34, C33–C58, and C46–C65. The short motif at 50-52 (RGD) is the Cell attachment site element.

This sequence belongs to the venom metalloproteinase (M12B) family. P-II subfamily. P-IIa sub-subfamily. As to quaternary structure, monomer (disintegrin). In terms of tissue distribution, expressed by the venom gland.

The protein resides in the secreted. In terms of biological role, inhibits fibrinogen interaction with platelets. Acts by binding to alpha-IIb/beta-3 (ITGA2B/ITGB3) on the platelet surface and inhibits aggregation induced by ADP, thrombin, platelet-activating factor and collagen. This chain is Disintegrin basilicin, found in Crotalus basiliscus (Mexican west-coast rattlesnake).